An 816-amino-acid polypeptide reads, in one-letter code: Lon protease (816 aa).

In terms of domain architecture, Lon N-terminal spans 27 to 221 (LPLLPIRDVV…KVNDLLAREH (195 aa)). 372–379 (GPPGVGKT) lines the ATP pocket. In terms of domain architecture, Lon proteolytic spans 608–789 (KNEVGVVNGL…DEVLKLALEK (182 aa)). Catalysis depends on residues Ser-695 and Lys-738. Residues 795 to 816 (PKGKAKPATPKVVVRPSKEISA) are disordered. Over residues 800-809 (KPATPKVVVR) the composition is skewed to low complexity.

The protein belongs to the peptidase S16 family. Homohexamer. Organized in a ring with a central cavity.

It localises to the cytoplasm. The enzyme catalyses Hydrolysis of proteins in presence of ATP.. ATP-dependent serine protease that mediates the selective degradation of mutant and abnormal proteins as well as certain short-lived regulatory proteins. Required for cellular homeostasis and for survival from DNA damage and developmental changes induced by stress. Degrades polypeptides processively to yield small peptide fragments that are 5 to 10 amino acids long. Binds to DNA in a double-stranded, site-specific manner. The sequence is that of Lon protease from Trichlorobacter lovleyi (strain ATCC BAA-1151 / DSM 17278 / SZ) (Geobacter lovleyi).